The primary structure comprises 168 residues: Photosystem I assembly protein Ycf3 (168 aa).

TPR repeat units follow at residues 35–68 (AFAY…EMDP), 72–105 (SYIL…NPFL), and 120–153 (GEQA…TPGN).

The protein belongs to the Ycf3 family.

It is found in the plastid membrane. In terms of biological role, essential for the assembly of the photosystem I (PSI) complex. May act as a chaperone-like factor to guide the assembly of the PSI subunits. The chain is Photosystem I assembly protein Ycf3 from Cuscuta gronovii (Common dodder).